A 144-amino-acid polypeptide reads, in one-letter code: Large ribosomal subunit protein uL16 (144 aa).

The span at 1-16 (MLVPKRVKHRKVQRGH) shows a compositional bias: basic residues. Positions 1 to 20 (MLVPKRVKHRKVQRGHMRGE) are disordered.

This sequence belongs to the universal ribosomal protein uL16 family. In terms of assembly, part of the 50S ribosomal subunit.

Its function is as follows. Binds 23S rRNA and is also seen to make contacts with the A and possibly P site tRNAs. In Limosilactobacillus reuteri (strain DSM 20016) (Lactobacillus reuteri), this protein is Large ribosomal subunit protein uL16.